The sequence spans 140 residues: Nucleoside diphosphate kinase (140 aa).

Residues Lys-11, Phe-59, Arg-87, Thr-93, Arg-104, and Asn-114 each coordinate ATP. His-117 (pros-phosphohistidine intermediate) is an active-site residue.

It belongs to the NDK family. As to quaternary structure, homotetramer. Mg(2+) serves as cofactor.

The protein localises to the cytoplasm. The catalysed reaction is a 2'-deoxyribonucleoside 5'-diphosphate + ATP = a 2'-deoxyribonucleoside 5'-triphosphate + ADP. It catalyses the reaction a ribonucleoside 5'-diphosphate + ATP = a ribonucleoside 5'-triphosphate + ADP. Its function is as follows. Major role in the synthesis of nucleoside triphosphates other than ATP. The ATP gamma phosphate is transferred to the NDP beta phosphate via a ping-pong mechanism, using a phosphorylated active-site intermediate. This is Nucleoside diphosphate kinase from Bradyrhizobium sp. (strain BTAi1 / ATCC BAA-1182).